Here is a 414-residue protein sequence, read N- to C-terminus: Imidazolonepropionase (414 aa).

Fe(3+)-binding residues include His77 and His79. Zn(2+) is bound by residues His77 and His79. Residues Arg86, Tyr149, and His184 each contribute to the 4-imidazolone-5-propanoate site. Tyr149 serves as a coordination point for N-formimidoyl-L-glutamate. His249 serves as a coordination point for Fe(3+). Position 249 (His249) interacts with Zn(2+). 4-imidazolone-5-propanoate is bound at residue Glu252. A Fe(3+)-binding site is contributed by Asp323. Asp323 contacts Zn(2+). Positions 325 and 327 each coordinate N-formimidoyl-L-glutamate. Position 328 (Ser328) interacts with 4-imidazolone-5-propanoate.

This sequence belongs to the metallo-dependent hydrolases superfamily. HutI family. Zn(2+) serves as cofactor. Fe(3+) is required as a cofactor.

It localises to the cytoplasm. The enzyme catalyses 4-imidazolone-5-propanoate + H2O = N-formimidoyl-L-glutamate. It functions in the pathway amino-acid degradation; L-histidine degradation into L-glutamate; N-formimidoyl-L-glutamate from L-histidine: step 3/3. Catalyzes the hydrolytic cleavage of the carbon-nitrogen bond in imidazolone-5-propanoate to yield N-formimidoyl-L-glutamate. It is the third step in the universal histidine degradation pathway. The chain is Imidazolonepropionase from Phocaeicola vulgatus (strain ATCC 8482 / DSM 1447 / JCM 5826 / CCUG 4940 / NBRC 14291 / NCTC 11154) (Bacteroides vulgatus).